The following is a 425-amino-acid chain: L-cysteine:1D-myo-inositol 2-amino-2-deoxy-alpha-D-glucopyranoside ligase (425 aa).

C43 serves as a coordination point for Zn(2+). L-cysteinyl-5'-AMP is bound by residues C43–T46, S58, and N81–T83. The short motif at I45–H55 is the 'HIGH' region element. Residues E199–P204 carry the 'ERGGDP' region motif. L-cysteinyl-5'-AMP is bound at residue W240. C244 contacts Zn(2+). G262–D264 provides a ligand contact to L-cysteinyl-5'-AMP. H269 provides a ligand contact to Zn(2+). V295 provides a ligand contact to L-cysteinyl-5'-AMP. Positions K301–S305 match the 'KMSKS' region motif.

The protein belongs to the class-I aminoacyl-tRNA synthetase family. MshC subfamily. Monomer. It depends on Zn(2+) as a cofactor.

It catalyses the reaction 1D-myo-inositol 2-amino-2-deoxy-alpha-D-glucopyranoside + L-cysteine + ATP = 1D-myo-inositol 2-(L-cysteinylamino)-2-deoxy-alpha-D-glucopyranoside + AMP + diphosphate + H(+). Its function is as follows. Catalyzes the ATP-dependent condensation of GlcN-Ins and L-cysteine to form L-Cys-GlcN-Ins. The chain is L-cysteine:1D-myo-inositol 2-amino-2-deoxy-alpha-D-glucopyranoside ligase from Paenarthrobacter aurescens (strain TC1).